The sequence spans 78 residues: uncharacterized protein (78 aa).

2 consecutive transmembrane segments (helical) span residues 20–40 (SVYF…WLVV) and 57–77 (LLMD…ILIA).

It is found in the cell membrane. This is an uncharacterized protein from Escherichia coli (strain K12).